The following is a 366-amino-acid chain: Rab9 effector protein with kelch motifs (366 aa).

Kelch repeat units follow at residues 49–95 (KILI…FISA), 100–146 (NIWV…TSSA), 151–200 (KLYV…VLTA), 204–253 (KLFV…AWKS), 254–303 (YIYI…LLPW), and 343–366 (LCFIFGGMDTDGELHSDCCVTILQ).

In terms of biological role, rab9 effector required for endosome to trans-Golgi network (TGN) transport. This Xenopus laevis (African clawed frog) protein is Rab9 effector protein with kelch motifs (rabepk).